The chain runs to 270 residues: Decarboxylase NovR (270 aa).

It belongs to the aldolase class II family.

Its pathway is antibiotic biosynthesis; novobiocin biosynthesis. Functionally, may mediate the 2 consecutive oxidative decarboxylation steps in the biosynthesis of the prenylated hydroxybenzoic acid moiety of novobiocin, an aminocoumarin family antibiotic that targets bacterial DNA gyrases. This is Decarboxylase NovR (novR) from Streptomyces niveus (Streptomyces spheroides).